Consider the following 704-residue polypeptide: Elongation factor G (704 aa).

The 283-residue stretch at 8–290 (ARYRNIGISA…AVVDYLPSPV (283 aa)) folds into the tr-type G domain. GTP contacts are provided by residues 17 to 24 (AHIDAGKT), 88 to 92 (DTPGH), and 142 to 145 (NKMD).

This sequence belongs to the TRAFAC class translation factor GTPase superfamily. Classic translation factor GTPase family. EF-G/EF-2 subfamily.

It is found in the cytoplasm. Catalyzes the GTP-dependent ribosomal translocation step during translation elongation. During this step, the ribosome changes from the pre-translocational (PRE) to the post-translocational (POST) state as the newly formed A-site-bound peptidyl-tRNA and P-site-bound deacylated tRNA move to the P and E sites, respectively. Catalyzes the coordinated movement of the two tRNA molecules, the mRNA and conformational changes in the ribosome. The chain is Elongation factor G from Pectobacterium carotovorum subsp. carotovorum (strain PC1).